The chain runs to 401 residues: Subtilisin-like protease 10 (401 aa).

A signal peptide spans 1-19; that stretch reads MLFLKAVIAILSVLPAADA. Positions 20–116 are excised as a propeptide; that stretch reads AAILNFENKQ…IEPDRMASAQ (97 aa). One can recognise an Inhibitor I9 domain in the interval 35-112; that stretch reads SYIVVLKNDI…QVDYIEPDRM (78 aa). The Peptidase S8 domain occupies 126–401; that stretch reads SWGLGRISHQ…NRLLYNGSGQ (276 aa). Active-site charge relay system residues include aspartate 158 and histidine 189. Asparagine 250 carries N-linked (GlcNAc...) asparagine glycosylation. Serine 347 functions as the Charge relay system in the catalytic mechanism. The N-linked (GlcNAc...) asparagine glycan is linked to asparagine 397.

It belongs to the peptidase S8 family.

The protein resides in the secreted. Functionally, secreted subtilisin-like serine protease with keratinolytic activity that contributes to pathogenicity. This is Subtilisin-like protease 10 (SUB10) from Arthroderma otae (strain ATCC MYA-4605 / CBS 113480) (Microsporum canis).